A 142-amino-acid polypeptide reads, in one-letter code: Photosystem II extrinsic protein U (142 aa).

A signal peptide spans 1 to 28; that stretch reads MKKIGLLLTIFSLCLGCLGLVPSDKAHA.

This sequence belongs to the PsbU family. PSII is composed of 1 copy each of membrane proteins PsbA, PsbB, PsbC, PsbD, PsbE, PsbF, PsbH, PsbI, PsbJ, PsbK, PsbL, PsbM, PsbT, PsbX, PsbY, PsbZ, Psb30/Ycf12, peripheral proteins PsbO, CyanoQ (PsbQ), PsbU, PsbV and a large number of cofactors. It forms dimeric complexes.

Its subcellular location is the cellular thylakoid membrane. Its function is as follows. One of the extrinsic, lumenal subunits of photosystem II (PSII). PSII is a light-driven water plastoquinone oxidoreductase, using light energy to abstract electrons from H(2)O, generating a proton gradient subsequently used for ATP formation. The extrinsic proteins stabilize the structure of photosystem II oxygen-evolving complex (OEC), the ion environment of oxygen evolution and protect the OEC against heat-induced inactivation. The polypeptide is Photosystem II extrinsic protein U (Trichodesmium erythraeum (strain IMS101)).